The chain runs to 232 residues: Phosphatidylserine decarboxylase proenzyme (232 aa).

S190 functions as the Schiff-base intermediate with substrate; via pyruvic acid in the catalytic mechanism. At S190 the chain carries Pyruvic acid (Ser); by autocatalysis.

The protein belongs to the phosphatidylserine decarboxylase family. PSD-A subfamily. In terms of assembly, heterodimer of a large membrane-associated beta subunit and a small pyruvoyl-containing alpha subunit. It depends on pyruvate as a cofactor. Is synthesized initially as an inactive proenzyme. Formation of the active enzyme involves a self-maturation process in which the active site pyruvoyl group is generated from an internal serine residue via an autocatalytic post-translational modification. Two non-identical subunits are generated from the proenzyme in this reaction, and the pyruvate is formed at the N-terminus of the alpha chain, which is derived from the carboxyl end of the proenzyme. The post-translation cleavage follows an unusual pathway, termed non-hydrolytic serinolysis, in which the side chain hydroxyl group of the serine supplies its oxygen atom to form the C-terminus of the beta chain, while the remainder of the serine residue undergoes an oxidative deamination to produce ammonia and the pyruvoyl prosthetic group on the alpha chain.

It localises to the cell membrane. It catalyses the reaction a 1,2-diacyl-sn-glycero-3-phospho-L-serine + H(+) = a 1,2-diacyl-sn-glycero-3-phosphoethanolamine + CO2. It functions in the pathway phospholipid metabolism; phosphatidylethanolamine biosynthesis; phosphatidylethanolamine from CDP-diacylglycerol: step 2/2. In terms of biological role, catalyzes the formation of phosphatidylethanolamine (PtdEtn) from phosphatidylserine (PtdSer). In Rhodopseudomonas palustris (strain BisB18), this protein is Phosphatidylserine decarboxylase proenzyme.